A 297-amino-acid polypeptide reads, in one-letter code: Bifunctional protein FolD 1 (297 aa).

NADP(+) is bound by residues 164 to 166 (GRS), serine 193, and isoleucine 234.

It belongs to the tetrahydrofolate dehydrogenase/cyclohydrolase family. Homodimer.

It carries out the reaction (6R)-5,10-methylene-5,6,7,8-tetrahydrofolate + NADP(+) = (6R)-5,10-methenyltetrahydrofolate + NADPH. The catalysed reaction is (6R)-5,10-methenyltetrahydrofolate + H2O = (6R)-10-formyltetrahydrofolate + H(+). The protein operates within one-carbon metabolism; tetrahydrofolate interconversion. Its function is as follows. Catalyzes the oxidation of 5,10-methylenetetrahydrofolate to 5,10-methenyltetrahydrofolate and then the hydrolysis of 5,10-methenyltetrahydrofolate to 10-formyltetrahydrofolate. The protein is Bifunctional protein FolD 1 of Haloarcula marismortui (strain ATCC 43049 / DSM 3752 / JCM 8966 / VKM B-1809) (Halobacterium marismortui).